A 172-amino-acid polypeptide reads, in one-letter code: Translationally-controlled tumor protein (172 aa).

Residues 1 to 172 enclose the TCTP domain; the sequence is MIIYRDLISH…FKDGLEMEKC (172 aa). S46 carries the phosphoserine; by PLK1 modification. Residue S53 is modified to Phosphoserine. S64 bears the Phosphoserine; by PLK1 mark. The required for reduction of TSC22D1 protein stability stretch occupies residues 70–172; it reads VDIVMNHHLQ…FKDGLEMEKC (103 aa).

It belongs to the TCTP family. Homodimer. Interacts with STEAP3. Interacts with TSC22D1; interaction results in the destabilization of TSC22D1 protein.

The protein localises to the cytoplasm. Its function is as follows. Involved in calcium binding and microtubule stabilization. Acts as a negative regulator of TSC22D1-mediated apoptosis, via interaction with and destabilization of TSC22D1 protein. The protein is Translationally-controlled tumor protein (TPT1) of Oryctolagus cuniculus (Rabbit).